Reading from the N-terminus, the 1211-residue chain is DNA polymerase beta (1211 aa).

4 repeat units span residues K1074–G1077, K1078–G1081, N1082–G1085, and N1086–G1089. Residues K1074–G1089 form a 4 X 4 AA tandem repeats of [NK]-[P]-A-G region.

It belongs to the DNA polymerase type-B family.

The catalysed reaction is DNA(n) + a 2'-deoxyribonucleoside 5'-triphosphate = DNA(n+1) + diphosphate. DNA-directed DNA polymerase involved in viral DNA replication. The sequence is that of DNA polymerase beta (DPOL) from African swine fever virus (strain Badajoz 1971 Vero-adapted) (Ba71V).